The chain runs to 396 residues: Elongation factor Tu (396 aa).

A tr-type G domain is found at 10–205; it reads KPHVNIGTIG…AVDESIPDPV (196 aa). The tract at residues 19–26 is G1; sequence GHVDHGKT. GTP is bound at residue 19-26; the sequence is GHVDHGKT. Residue Thr-26 participates in Mg(2+) binding. A G2 region spans residues 62-66; sequence GITIN. Positions 83-86 are G3; it reads DAPG. Residues 83 to 87 and 138 to 141 contribute to the GTP site; these read DAPGH and NKAD. A G4 region spans residues 138 to 141; that stretch reads NKAD. The tract at residues 175–177 is G5; sequence SAL.

It belongs to the TRAFAC class translation factor GTPase superfamily. Classic translation factor GTPase family. EF-Tu/EF-1A subfamily. As to quaternary structure, monomer.

The protein localises to the cytoplasm. It catalyses the reaction GTP + H2O = GDP + phosphate + H(+). Its function is as follows. GTP hydrolase that promotes the GTP-dependent binding of aminoacyl-tRNA to the A-site of ribosomes during protein biosynthesis. This is Elongation factor Tu from Mycobacterium bovis (strain ATCC BAA-935 / AF2122/97).